We begin with the raw amino-acid sequence, 87 residues long: Glutaredoxin (87 aa).

In terms of domain architecture, Glutaredoxin spans 1-87 (MFKVYGYDSN…GFDQLREYFK (87 aa)). A disulfide bridge connects residues Cys-14 and Cys-17.

The protein belongs to the glutaredoxin family.

In terms of biological role, serves as a reducing agent for the phage-induced ribonucleotide reductase, but not for the bacterial ones. This specificity may be the result of sequence differences around the redox-active disulfide bond. The oxidized form accepts electrons from bacterial glutathione and will, in turn, reduce other small disulfides. Can also be reduced by NADPH and by bacterial thioredoxin reductase. This Enterobacteria phage T4 (Bacteriophage T4) protein is Glutaredoxin (NRDC).